The sequence spans 250 residues: UPF0494 membrane protein PB2B2.07c (250 aa).

Helical transmembrane passes span 98–118 (WPLL…NFEV), 144–164 (IAIY…MFPL), and 179–199 (MIIA…GATI).

The protein belongs to the UPF0494 family.

Its subcellular location is the cytoplasm. The protein localises to the endoplasmic reticulum. It is found in the golgi apparatus. The protein resides in the membrane. The polypeptide is UPF0494 membrane protein PB2B2.07c (Schizosaccharomyces pombe (strain 972 / ATCC 24843) (Fission yeast)).